The sequence spans 132 residues: uncharacterized protein (132 aa).

The N-terminal stretch at 1–19 (MKKALFLVGLVFTAGVISS) is a signal peptide. Residue cysteine 20 is the site of N-palmitoyl cysteine attachment. A lipid anchor (S-diacylglycerol cysteine) is attached at cysteine 20.

It is found in the cell membrane. This is an uncharacterized protein from Aquifex aeolicus (strain VF5).